A 192-amino-acid polypeptide reads, in one-letter code: Orotate phosphoribosyltransferase (192 aa).

Residues Arg-101, Lys-102, Lys-105, His-107, and 129-137 (EDVITTGGS) contribute to the 5-phospho-alpha-D-ribose 1-diphosphate site. Positions 133 and 161 each coordinate orotate.

It belongs to the purine/pyrimidine phosphoribosyltransferase family. PyrE subfamily. In terms of assembly, homodimer. It depends on Mg(2+) as a cofactor.

The catalysed reaction is orotidine 5'-phosphate + diphosphate = orotate + 5-phospho-alpha-D-ribose 1-diphosphate. It functions in the pathway pyrimidine metabolism; UMP biosynthesis via de novo pathway; UMP from orotate: step 1/2. Functionally, catalyzes the transfer of a ribosyl phosphate group from 5-phosphoribose 1-diphosphate to orotate, leading to the formation of orotidine monophosphate (OMP). This is Orotate phosphoribosyltransferase from Sorangium cellulosum (strain So ce56) (Polyangium cellulosum (strain So ce56)).